A 475-amino-acid chain; its full sequence is Ribulose bisphosphate carboxylase large chain (475 aa).

Positions 1-2 (MS) are excised as a propeptide. Proline 3 carries the N-acetylproline modification. An N6,N6,N6-trimethyllysine modification is found at lysine 14. Substrate is bound by residues asparagine 123 and threonine 173. Residue lysine 175 is the Proton acceptor of the active site. Position 177 (lysine 177) interacts with substrate. Positions 201, 203, and 204 each coordinate Mg(2+). Lysine 201 bears the N6-carboxylysine mark. The active-site Proton acceptor is histidine 294. Positions 295, 327, and 379 each coordinate substrate.

Belongs to the RuBisCO large chain family. Type I subfamily. In terms of assembly, heterohexadecamer of 8 large chains and 8 small chains; disulfide-linked. The disulfide link is formed within the large subunit homodimers. Requires Mg(2+) as cofactor. In terms of processing, the disulfide bond which can form in the large chain dimeric partners within the hexadecamer appears to be associated with oxidative stress and protein turnover.

The protein localises to the plastid. Its subcellular location is the chloroplast. It carries out the reaction 2 (2R)-3-phosphoglycerate + 2 H(+) = D-ribulose 1,5-bisphosphate + CO2 + H2O. The catalysed reaction is D-ribulose 1,5-bisphosphate + O2 = 2-phosphoglycolate + (2R)-3-phosphoglycerate + 2 H(+). Its function is as follows. RuBisCO catalyzes two reactions: the carboxylation of D-ribulose 1,5-bisphosphate, the primary event in carbon dioxide fixation, as well as the oxidative fragmentation of the pentose substrate in the photorespiration process. Both reactions occur simultaneously and in competition at the same active site. The sequence is that of Ribulose bisphosphate carboxylase large chain from Afrocarpus gracilior (African fern pine).